Consider the following 339-residue polypeptide: UDP-N-acetylenolpyruvoylglucosamine reductase (339 aa).

One can recognise an FAD-binding PCMH-type domain in the interval 19–189 (VDVQARLFAE…LRVRFKLSRV (171 aa)). The active site involves Arg166. Catalysis depends on Ser239, which acts as the Proton donor. Glu335 is a catalytic residue.

It belongs to the MurB family. FAD is required as a cofactor.

The protein resides in the cytoplasm. It carries out the reaction UDP-N-acetyl-alpha-D-muramate + NADP(+) = UDP-N-acetyl-3-O-(1-carboxyvinyl)-alpha-D-glucosamine + NADPH + H(+). It participates in cell wall biogenesis; peptidoglycan biosynthesis. In terms of biological role, cell wall formation. In Pseudomonas syringae pv. syringae (strain B728a), this protein is UDP-N-acetylenolpyruvoylglucosamine reductase.